The following is a 480-amino-acid chain: Membrane-bound lytic murein transglycosylase F (480 aa).

Residues 1–15 (MNRILLTLLTLTLLA) form the signal peptide. The non-LT domain stretch occupies residues 16-259 (GCQRVAVEET…HLDEKYFAHV (244 aa)). The tract at residues 260-480 (KRFDYVDTRA…EKAITGAQPE (221 aa)) is LT domain. Residue Glu-304 is part of the active site.

It in the N-terminal section; belongs to the bacterial solute-binding protein 3 family. This sequence in the C-terminal section; belongs to the transglycosylase Slt family.

It localises to the cell outer membrane. It carries out the reaction Exolytic cleavage of the (1-&gt;4)-beta-glycosidic linkage between N-acetylmuramic acid (MurNAc) and N-acetylglucosamine (GlcNAc) residues in peptidoglycan, from either the reducing or the non-reducing ends of the peptidoglycan chains, with concomitant formation of a 1,6-anhydrobond in the MurNAc residue.. Murein-degrading enzyme that degrades murein glycan strands and insoluble, high-molecular weight murein sacculi, with the concomitant formation of a 1,6-anhydromuramoyl product. Lytic transglycosylases (LTs) play an integral role in the metabolism of the peptidoglycan (PG) sacculus. Their lytic action creates space within the PG sacculus to allow for its expansion as well as for the insertion of various structures such as secretion systems and flagella. The protein is Membrane-bound lytic murein transglycosylase F of Shewanella woodyi (strain ATCC 51908 / MS32).